A 319-amino-acid polypeptide reads, in one-letter code: ATP-dependent 6-phosphofructokinase (319 aa).

Residue Gly-11 participates in ATP binding. Residue 21-25 coordinates ADP; sequence RAVVR. Residues 72 to 73 and 102 to 105 each bind ATP; these read RC and GDGS. Mg(2+) is bound at residue Asp-103. A substrate-binding site is contributed by 125–127; that stretch reads TID. Catalysis depends on Asp-127, which acts as the Proton acceptor. Arg-154 contacts ADP. Residues Arg-162 and 169–171 each bind substrate; that span reads MGR. Residues 185-187, Arg-211, and 213-215 contribute to the ADP site; these read GAE and KRH. Substrate contacts are provided by residues Glu-222, Arg-243, and 249-252; that span reads HVQR.

It belongs to the phosphofructokinase type A (PFKA) family. ATP-dependent PFK group I subfamily. Prokaryotic clade 'B1' sub-subfamily. In terms of assembly, homotetramer. Mg(2+) is required as a cofactor.

The protein localises to the cytoplasm. It catalyses the reaction beta-D-fructose 6-phosphate + ATP = beta-D-fructose 1,6-bisphosphate + ADP + H(+). Its pathway is carbohydrate degradation; glycolysis; D-glyceraldehyde 3-phosphate and glycerone phosphate from D-glucose: step 3/4. With respect to regulation, allosterically activated by ADP and other diphosphonucleosides, and allosterically inhibited by phosphoenolpyruvate. Its function is as follows. Catalyzes the phosphorylation of D-fructose 6-phosphate to fructose 1,6-bisphosphate by ATP, the first committing step of glycolysis. This Clostridioides difficile (strain 630) (Peptoclostridium difficile) protein is ATP-dependent 6-phosphofructokinase.